The sequence spans 161 residues: Phosphopantetheine adenylyltransferase (161 aa).

Substrate is bound at residue threonine 9. ATP-binding positions include threonine 9–phenylalanine 10 and histidine 17. Residues lysine 41, leucine 73, and arginine 87 each coordinate substrate. ATP contacts are provided by residues glycine 88–arginine 90, glutamate 98, and tyrosine 123–threonine 129.

The protein belongs to the bacterial CoaD family. As to quaternary structure, homohexamer. The cofactor is Mg(2+).

It localises to the cytoplasm. The enzyme catalyses (R)-4'-phosphopantetheine + ATP + H(+) = 3'-dephospho-CoA + diphosphate. Its pathway is cofactor biosynthesis; coenzyme A biosynthesis; CoA from (R)-pantothenate: step 4/5. Functionally, reversibly transfers an adenylyl group from ATP to 4'-phosphopantetheine, yielding dephospho-CoA (dPCoA) and pyrophosphate. In Janthinobacterium sp. (strain Marseille) (Minibacterium massiliensis), this protein is Phosphopantetheine adenylyltransferase.